A 169-amino-acid polypeptide reads, in one-letter code: Shikimate kinase (169 aa).

12–17 provides a ligand contact to ATP; sequence GCGKST. Ser16 provides a ligand contact to Mg(2+). Substrate-binding residues include Asp34, Arg57, and Gly79. ATP is bound at residue Arg116. Residue Arg133 coordinates substrate.

Belongs to the shikimate kinase family. Monomer. The cofactor is Mg(2+).

The protein localises to the cytoplasm. It carries out the reaction shikimate + ATP = 3-phosphoshikimate + ADP + H(+). The protein operates within metabolic intermediate biosynthesis; chorismate biosynthesis; chorismate from D-erythrose 4-phosphate and phosphoenolpyruvate: step 5/7. Functionally, catalyzes the specific phosphorylation of the 3-hydroxyl group of shikimic acid using ATP as a cosubstrate. The polypeptide is Shikimate kinase (Clostridium beijerinckii (strain ATCC 51743 / NCIMB 8052) (Clostridium acetobutylicum)).